Here is an 816-residue protein sequence, read N- to C-terminus: Two pore channel protein 1 (816 aa).

Topologically, residues 1-112 (MAVSLDDDVP…AHNHLFYLME (112 aa)) are cytoplasmic. Residues 17–64 (EGGSAPLAPSNGLGQEELPSKNGGSYAIHDSQAPSLSSGGESSPSSPA) form a disordered region. Residues 50-63 (PSLSSGGESSPSSP) show a composition bias toward low complexity. A helical membrane pass occupies residues 113–133 (LATALLLLLLSLCEAPAVPAL). Arg-134 is a topological domain (extracellular). The chain crosses the membrane as a helical span at residues 135–155 (LGIYVHATLELFALMVVVFEL). Residues 156–177 (CMKLRWLGLHTFIRHKRTMVKT) lie on the Cytoplasmic side of the membrane. The chain crosses the membrane as a helical span at residues 178–198 (SVLVVQFVEAIVVLVRQMSHV). The Extracellular segment spans residues 199–200 (RV). The chain crosses the membrane as a helical span at residues 201 to 220 (TRALRCIFLVDCRYCGGVRR). Topologically, residues 221-234 (NLRQIFQSLPPFMD) are cytoplasmic. Residues 235–255 (ILLLLLFFMIIFAILGFYLFS) traverse the membrane as a helical segment. Topologically, residues 256 to 262 (PNPSDPY) are extracellular. Positions 263-286 (FSTLENSIVSLFVLLTTANFPDVM) form an intramembrane region, helical; Pore-forming. At 287-294 (MPSYSRNP) the chain is on the extracellular side. Residues 295–315 (WSCVFFIVYLSIELYFIMNLL) traverse the membrane as a helical segment. Residues 316-444 (LAVVFDTFND…NILVKSKAFQ (129 aa)) are Cytoplasmic-facing. A helical transmembrane segment spans residues 445 to 465 (YFMYLVVAVNGVWILVETFML). Residues 466–479 (KGGNFFSKHVPWSY) lie on the Extracellular side of the membrane. Residues 480–500 (LVFLTIYGVELFLKVAGLGPV) traverse the membrane as a helical segment. At 501–503 (EYL) the chain is on the cytoplasmic side. Residues 504–526 (SSGWNLFDFSVTVFAFLGLLALA) traverse the membrane as a helical segment. Residues 527–534 (LNMEPFYF) are Extracellular-facing. The chain crosses the membrane as a helical span at residues 535-549 (IVVLRPLQLLRLFKL). Residues 550 to 573 (KERYRNVLDTMFELLPRMASLGLT) lie on the Cytoplasmic side of the membrane. The helical transmembrane segment at 574-594 (LLIFYYSFAIVGMEFFCGIVF) threads the bilayer. Residues 595–629 (PNCCNTSTVADAYRWRNHTVGNRTVVEEGYYYLNN) lie on the Extracellular side of the membrane. 3 N-linked (GlcNAc...) asparagine glycosylation sites follow: Asn-599, Asn-611, and Asn-616. Residues 630-653 (FDNILNSFVTLFELTVVNNWYIIM) constitute an intramembrane region (helical; Pore-forming). Over 654 to 670 (EGVTSQTSHWSRLYFMT) the chain is Extracellular. Residues 671–691 (FYIVTMVVMTIIVAFILEAFV) form a helical membrane-spanning segment. The Cytoplasmic portion of the chain corresponds to 692 to 816 (FRMNYSRKNQ…GSRQRSQTVT (125 aa)). The stretch at 769 to 796 (SLKMYQEEIQEWYEEHAREQEQQRQLSS) forms a coiled coil. Residues 782-816 (EEHAREQEQQRQLSSSAAPAAQQPPGSRQRSQTVT) form a disordered region. Residues 791–816 (QRQLSSSAAPAAQQPPGSRQRSQTVT) are compositionally biased toward low complexity.

The protein belongs to the calcium channel alpha-1 subunit (TC 1.A.1.11) family. Two pore calcium channel subfamily. Dimer. Interacts with MTOR; the interaction is required for TPCN1 ATP sensitivity. Interacts with STX7, STX8 and STX12. Interacts with JPT2. Found in a complex with LSM12, TPCN1 and TPCN2. In terms of processing, N-glycosylated. Highest expression found in the heart and kidney, and lowest expression found in the spleen.

It localises to the lysosome membrane. The protein localises to the endosome membrane. Its subcellular location is the early endosome membrane. The protein resides in the recycling endosome membrane. It carries out the reaction Na(+)(in) = Na(+)(out). It catalyses the reaction Ca(2+)(in) = Ca(2+)(out). With respect to regulation, na(+) current is inhibited by ATP in a MTORC-dependent manner. ATP sensitivity is independent of PI(3,5)P2. Probably regulated by Mg(2+) ions, cytosolic Mg(2+) selectively inhibits outward current while lysosomal Mg(2+) modestly inhibits both the outward and inward currents. In the absence of Mg(2+), NAADP readily activates TPCN2, with properties similar to PI(3,5)P2. Both current elicited by PI(3,5)P2 as well as NAADP are inhibited by tetrandrine. Functionally, intracellular channel initially characterized as a non-selective Ca(2+)-permeable channel activated by NAADP (nicotinic acid adenine dinucleotide phosphate), it is also a voltage-gated highly-selective Na(+) channel activated directly by PI(3,5)P2 (phosphatidylinositol 3,5-bisphosphate) that senses pH changes and confers electrical excitability to organelles. Localizes to the early and recycling endosomes membranes where it plays a role in the uptake and processing of proteins and regulates organellar membrane excitability, membrane trafficking and pH homeostasis. Ion selectivity is not fixed but rather agonist-dependent and under defined ionic conditions, can be readily activated by both NAADP and PI(3,5)P2. Required for mTOR-dependent nutrient sensing. In terms of biological role, (Microbial infection) During Ebola virus (EBOV) infection, controls the movement of endosomes containing virus particles and is required by EBOV to escape from the endosomal network into the cell cytoplasm. The polypeptide is Two pore channel protein 1 (Homo sapiens (Human)).